The chain runs to 491 residues: Probable glycine dehydrogenase (decarboxylating) subunit 2 (491 aa).

K273 carries the N6-(pyridoxal phosphate)lysine modification.

The protein belongs to the GcvP family. C-terminal subunit subfamily. The glycine cleavage system is composed of four proteins: P, T, L and H. In this organism, the P 'protein' is a heterodimer of two subunits. Pyridoxal 5'-phosphate is required as a cofactor.

It catalyses the reaction N(6)-[(R)-lipoyl]-L-lysyl-[glycine-cleavage complex H protein] + glycine + H(+) = N(6)-[(R)-S(8)-aminomethyldihydrolipoyl]-L-lysyl-[glycine-cleavage complex H protein] + CO2. Functionally, the glycine cleavage system catalyzes the degradation of glycine. The P protein binds the alpha-amino group of glycine through its pyridoxal phosphate cofactor; CO(2) is released and the remaining methylamine moiety is then transferred to the lipoamide cofactor of the H protein. In Bacillus anthracis (strain A0248), this protein is Probable glycine dehydrogenase (decarboxylating) subunit 2.